The sequence spans 265 residues: 3-methyl-2-oxobutanoate hydroxymethyltransferase (265 aa).

Mg(2+)-binding residues include Asp-45 and Asp-84. Residues 45–46, Asp-84, and Lys-112 each bind 3-methyl-2-oxobutanoate; that span reads DS. Glu-114 is a binding site for Mg(2+). Catalysis depends on Glu-181, which acts as the Proton acceptor.

Belongs to the PanB family. Homodecamer; pentamer of dimers. Mg(2+) is required as a cofactor.

Its subcellular location is the cytoplasm. It carries out the reaction 3-methyl-2-oxobutanoate + (6R)-5,10-methylene-5,6,7,8-tetrahydrofolate + H2O = 2-dehydropantoate + (6S)-5,6,7,8-tetrahydrofolate. The protein operates within cofactor biosynthesis; (R)-pantothenate biosynthesis; (R)-pantoate from 3-methyl-2-oxobutanoate: step 1/2. Its function is as follows. Catalyzes the reversible reaction in which hydroxymethyl group from 5,10-methylenetetrahydrofolate is transferred onto alpha-ketoisovalerate to form ketopantoate. The polypeptide is 3-methyl-2-oxobutanoate hydroxymethyltransferase (Yersinia pseudotuberculosis serotype IB (strain PB1/+)).